Here is a 413-residue protein sequence, read N- to C-terminus: PCI domain-containing protein 2 homolog (413 aa).

One can recognise a PCI domain in the interval 222 to 403 (VAYNYFLGRK…QKLVISKTNA (182 aa)).

The protein belongs to the CSN12 family.

The sequence is that of PCI domain-containing protein 2 homolog from Caenorhabditis briggsae.